Consider the following 615-residue polypeptide: Sodium-dependent neutral amino acid transporter B(0)AT3 (615 aa).

Residues 1 to 26 (MAQASGMDPLVDIEDERPKWDNKLQY) lie on the Cytoplasmic side of the membrane. The chain crosses the membrane as a helical span at residues 27–47 (LLSCIGFAVGLGNIWRFPYLC). Residues 48–52 (HTHGG) are Extracellular-facing. The helical transmembrane segment at 53 to 73 (GAFLIPYFIALVFEGIPLFYI) threads the bilayer. Residues 74-105 (ELAIGQRLRRGSIGVWKTISPYLGGVGLGCFS) are Cytoplasmic-facing. The helical transmembrane segment at 106–126 (VSFLVSLYYNTILLWVLWFFL) threads the bilayer. The Extracellular portion of the chain corresponds to 127-177 (NSFQHPLPWSTCPLDLNRTGFVQECQSSGTVSYFWYRQTLNITSDISNTGT). 2 N-linked (GlcNAc...) asparagine glycosylation sites follow: N143 and N167. A helical transmembrane segment spans residues 178-198 (IQWKLFLCLVACWTTVYLCVI). The Cytoplasmic segment spans residues 199-206 (RGIESTGK). The helical transmembrane segment at 207 to 227 (VIYFTALFPYLVLTIFLIRGL) threads the bilayer. Residues 228–255 (TLPGATEGLTYLFTPNMKILQNSRVWLD) are Extracellular-facing. A helical transmembrane segment spans residues 256-276 (AATQIFFSLSLAFGGHIAFAS). At 277 to 290 (YNQPRNNCEKDAVT) the chain is on the cytoplasmic side. The helical transmembrane segment at 291–311 (IALVNSMTSLYASITIFSIMG) threads the bilayer. The Extracellular portion of the chain corresponds to 312–397 (FKASNDYGRC…FTEAVLHMPG (86 aa)). The N-linked (GlcNAc...) asparagine glycan is linked to N353. Residues 398–418 (ASVWSVLFFGMLFTLGLSSMF) form a helical membrane-spanning segment. Residues 419-442 (GNMEGVITPLFDMGILPKGVPKET) lie on the Cytoplasmic side of the membrane. Residues 443–463 (MTGVVCFICFLSAICFTLQSG) form a helical membrane-spanning segment. Residues 464–472 (SYWLEIFDS) are Extracellular-facing. The chain crosses the membrane as a helical span at residues 473 to 493 (FAASLNLIIFAFMEVVGVIHV). Over 494–520 (YGIKRFCDDIEWMTGRRPSLYWQVTWR) the chain is Cytoplasmic. The helical transmembrane segment at 521-541 (VVSPMLLFGIFLSYIVLLAQS) threads the bilayer. The Extracellular portion of the chain corresponds to 542–571 (SPSYKAWNPQYEHFPSREEKLYPGWVQVTC). A helical transmembrane segment spans residues 572-592 (VLLSFLPSLWVPGIALAQLLF). Topologically, residues 593–615 (QYRQRWKNTHLESALKPQESRGC) are cytoplasmic.

The protein belongs to the sodium:neurotransmitter symporter (SNF) (TC 2.A.22) family. SLC6A18 subfamily. Interacts with CLTRN; this interaction regulates the trafficking of SLC6A18 to the cell membrane and its activity. In terms of tissue distribution, kidney-specific expression.

Its subcellular location is the apical cell membrane. The protein localises to the cell membrane. The enzyme catalyses L-alanine(out) + chloride(out) + 2 Na(+)(out) = L-alanine(in) + chloride(in) + 2 Na(+)(in). The catalysed reaction is glycine(out) + chloride(out) + 2 Na(+)(out) = glycine(in) + chloride(in) + 2 Na(+)(in). It carries out the reaction L-methionine(out) + chloride(out) + 2 Na(+)(out) = L-methionine(in) + chloride(in) + 2 Na(+)(in). It catalyses the reaction L-valine(out) + chloride(out) + 2 Na(+)(out) = L-valine(in) + chloride(in) + 2 Na(+)(in). The enzyme catalyses L-isoleucine(out) + chloride(out) + 2 Na(+)(out) = L-isoleucine(in) + chloride(in) + 2 Na(+)(in). The catalysed reaction is L-serine(out) + chloride(out) + 2 Na(+)(out) = L-serine(in) + chloride(in) + 2 Na(+)(in). It carries out the reaction L-leucine(out) + chloride(out) + 2 Na(+)(out) = L-leucine(in) + chloride(in) + 2 Na(+)(in). In terms of biological role, symporter that transports one amino acid molecule together with two sodium and one chloride ions in kidneys and plays a role in the neutral amino acids reabsorption. Preferentially transports neutral amino acids such as L-glycine and L-alanine but also other neutral amino acids. Required CLTRN for cell surface expression and for its amino acid transporter activity. The transport mechanism is pH-independent. This chain is Sodium-dependent neutral amino acid transporter B(0)AT3, found in Rattus norvegicus (Rat).